We begin with the raw amino-acid sequence, 776 residues long: Calcium-independent phospholipase A2-gamma (776 aa).

2 N-linked (GlcNAc...) asparagine glycosylation sites follow: Asn4 and Asn157. 2 disordered regions span residues 216–276 (KGKM…HPVS) and 306–334 (KLKSDPKSPPEEQEVSAKTEQAVNKDKKA). Composition is skewed to basic and acidic residues over residues 221 to 239 (QTKEDKQLQDKPDLEERKS) and 247 to 263 (VADRPDSESPLEVKDKL). The region spanning 439–634 (LTIDGGGTRG…LLNNPSALAL (196 aa)) is the PNPLA domain. The short motif at 443–448 (GGGTRG) is the GXGXXG element. A helical membrane pass occupies residues 469-489 (LFDYICGVSTGAILAFMLGLF). The GXSXG signature appears at 475-479 (GVSTG). Ser477 acts as the Nucleophile in catalysis. Asp621 functions as the Proton acceptor in the catalytic mechanism. The short motif at 621 to 623 (DGG) is the DGA/G element. Lys730 carries the post-translational modification N6-succinyllysine.

Expressed in myocardium (at protein level).

Its subcellular location is the endoplasmic reticulum membrane. The protein resides in the mitochondrion membrane. It localises to the peroxisome membrane. It carries out the reaction a 1,2-diacyl-sn-glycero-3-phosphocholine + H2O = a 1-acyl-sn-glycero-3-phosphocholine + a fatty acid + H(+). The catalysed reaction is a 1,2-diacyl-sn-glycero-3-phosphocholine + H2O = a 2-acyl-sn-glycero-3-phosphocholine + a fatty acid + H(+). It catalyses the reaction a 1,2-diacyl-sn-glycero-3-phosphoethanolamine + H2O = a 1-acyl-sn-glycero-3-phosphoethanolamine + a fatty acid + H(+). The enzyme catalyses a 1-O-(1Z-alkenyl)-2-acyl-sn-glycero-3-phosphocholine + H2O = a 1-O-(1Z-alkenyl)-sn-glycero-3-phosphocholine + a fatty acid + H(+). It carries out the reaction a 1-acyl-sn-glycero-3-phosphocholine + H2O = sn-glycerol 3-phosphocholine + a fatty acid + H(+). The catalysed reaction is 1-hexadecanoyl-2-(5Z,8Z,11Z,14Z-eicosatetraenoyl)-sn-glycero-3-phosphocholine + H2O = 2-(5Z,8Z,11Z,14Z)-eicosatetraenoyl-sn-glycero-3-phosphocholine + hexadecanoate + H(+). It catalyses the reaction 1-acyl-2-(9Z,12Z)-octadecadienoyl-sn-glycero-3-phosphocholine + H2O = a 1-acyl-sn-glycero-3-phosphocholine + (9Z,12Z)-octadecadienoate + H(+). The enzyme catalyses 1-acyl-2-(5Z,8Z,11Z,14Z-eicosatetraenoyl)-sn-glycero-3-phosphocholine + H2O = a 1-acyl-sn-glycero-3-phosphocholine + (5Z,8Z,11Z,14Z)-eicosatetraenoate + H(+). It carries out the reaction 1-hexadecanoyl-2-(5Z,8Z,11Z,14Z-eicosatetraenoyl)-sn-glycero-3-phosphocholine + H2O = 1-hexadecanoyl-sn-glycero-3-phosphocholine + (5Z,8Z,11Z,14Z)-eicosatetraenoate + H(+). The catalysed reaction is 1-octadecanoyl-2-(9Z-octadecenoyl)-sn-glycero-3-phosphocholine + H2O = 1-octadecanoyl-sn-glycero-3-phosphocholine + (9Z)-octadecenoate + H(+). It catalyses the reaction 1-hexadecanoyl-2-(9Z-octadecenoyl)-sn-glycero-3-phosphocholine + H2O = 1-hexadecanoyl-sn-glycero-3-phosphocholine + (9Z)-octadecenoate + H(+). The enzyme catalyses 1-hexadecanoyl-2-(9Z,12Z-octadecadienoyl)-sn-glycero-3-phosphocholine + H2O = (9Z,12Z)-octadecadienoate + 1-hexadecanoyl-sn-glycero-3-phosphocholine + H(+). It carries out the reaction 1-acyl-2-(9Z,12Z)-octadecadienoyl-sn-glycero-3-phosphoethanolamine + H2O = a 1-acyl-sn-glycero-3-phosphoethanolamine + (9Z,12Z)-octadecadienoate + H(+). The catalysed reaction is 1-acyl-2-(5Z,8Z,11Z,14Z)-eicosatetraenoyl-sn-glycero-3-phosphoethanolamine + H2O = a 1-acyl-sn-glycero-3-phosphoethanolamine + (5Z,8Z,11Z,14Z)-eicosatetraenoate + H(+). It catalyses the reaction 1-hexadecanoyl-2-(5Z,8Z,11Z,14Z-eicosatetraenoyl)-sn-glycero-3-phosphoethanolamine + H2O = 1-hexadecanoyl-sn-glycero-3-phosphoethanolamine + (5Z,8Z,11Z,14Z)-eicosatetraenoate + H(+). The enzyme catalyses 1-octadecanoyl-2-(9Z-octadecenoyl)-sn-glycero-3-phosphocholine + H2O = 2-(9Z-octadecenoyl)-sn-glycero-3-phosphocholine + octadecanoate + H(+). It carries out the reaction 1-hexadecanoyl-2-(4Z,7Z,10Z,13Z,16Z,19Z-docosahexaenoyl)-sn-glycero-3-phosphocholine + H2O = 2-(4Z,7Z,10Z,13Z,16Z,19Z-docosahexaenoyl)-sn-glycero-3-phosphocholine + hexadecanoate + H(+). The catalysed reaction is 1-O-(1Z)-hexadecenyl-2 (5Z,8Z,11Z,14Z)-eicosatetraenoyl-sn-glycero-3-phosphocholine + H2O = 1-(1Z-hexadecenyl)-sn-glycero-3-phosphocholine + (5Z,8Z,11Z,14Z)-eicosatetraenoate + H(+). It catalyses the reaction 1-O-(1Z-hexadecenyl)-2-(9Z-octadecenoyl)-sn-glycero-3-phosphocholine + H2O = 1-(1Z-hexadecenyl)-sn-glycero-3-phosphocholine + (9Z)-octadecenoate + H(+). The enzyme catalyses 1-hexadecanoyl-sn-glycero-3-phosphocholine + H2O = sn-glycerol 3-phosphocholine + hexadecanoate + H(+). It carries out the reaction 1',3'-bis-[1,2-di-(9Z,12Z-octadecadienoyl)-sn-glycero-3-phospho]-glycerol + H2O = 1'-[1,2-di-(9Z,12Z-octadecadienoyl)-sn-glycero-3-phospho]-3'-[1-(9Z,12Z-octadecadienoyl)-sn-glycero-3-phospho]-glycerol + (9Z,12Z)-octadecadienoate + H(+). The catalysed reaction is 1'-[1-acyl-2-(9-hydroxy-(10E,12Z)-octadecadienoyl)-sn-glycero-3-phospho]-3'-[1,2-diacyl-sn-glycero-3-phospho]-glycerol + H2O = 9-hydroxy-(10E,12Z)-octadecadienoate + 1'-[1,2-diacyl-sn-glycero-3-phospho],3'-[1-acyl-sn-glycero-3-phospho]-glycerol + H(+). It functions in the pathway phospholipid metabolism. Its activity is regulated as follows. Calcium-independent phospholipase. Calcium-independent and membrane-bound phospholipase, that catalyzes the esterolytic cleavage of fatty acids from glycerophospholipids to yield free fatty acids and lysophospholipids, hence regulating membrane physical properties and the release of lipid second messengers and growth factors. Hydrolyzes phosphatidylethanolamine, phosphatidylcholine and probably phosphatidylinositol with a possible preference for the former. Also has a broad substrate specificity in terms of fatty acid moieties, hydrolyzing saturated and mono-unsaturated fatty acids at nearly equal rates from either the sn-1 or sn-2 position in diacyl phosphatidylcholine. However, has a weak activity toward polyunsaturated fatty acids at the sn-2 position, and thereby favors the production of 2-arachidonoyl lysophosphatidylcholine, a key branch point metabolite in eicosanoid signaling. On the other hand, can produce arachidonic acid from the sn-1 position of diacyl phospholipid and from the sn-2 position of arachidonate-containing plasmalogen substrates. Therefore, plays an important role in the mobilization of arachidonic acid in response to cellular stimuli and the generation of lipid second messengers. Can also hydrolyze lysophosphatidylcholine. In the mitochondrial compartment, catalyzes the hydrolysis and release of oxidized aliphatic chains from cardiolipin and integrates mitochondrial bioenergetics and signaling. It is essential for maintaining efficient bioenergetic mitochondrial function through tailoring mitochondrial membrane lipid metabolism and composition. This chain is Calcium-independent phospholipase A2-gamma, found in Mus musculus (Mouse).